The sequence spans 269 residues: Small ribosomal subunit protein uS2 (269 aa).

The segment at 228–269 (QLDSDDDYEEFDESLAEGDYDDYDEEEDEDSETVSSQEGEEE) is disordered. The segment covering 230-269 (DSDDDYEEFDESLAEGDYDDYDEEEDEDSETVSSQEGEEE) has biased composition (acidic residues).

It belongs to the universal ribosomal protein uS2 family.

This chain is Small ribosomal subunit protein uS2, found in Crocosphaera subtropica (strain ATCC 51142 / BH68) (Cyanothece sp. (strain ATCC 51142)).